A 481-amino-acid polypeptide reads, in one-letter code: (S)-N-methylcoclaurine 3'-hydroxylase isozyme 1 (481 aa).

Cys423 lines the heme pocket.

The protein belongs to the cytochrome P450 family. It depends on heme as a cofactor. In terms of tissue distribution, restricted to the parietal region of sieve elements adjacent or proximal to laticifers in roots, stems, leaves, carpels and hypocotyls.

The protein localises to the endoplasmic reticulum. The catalysed reaction is (S)-N-methylcoclaurine + reduced [NADPH--hemoprotein reductase] + O2 = (S)-3'-hydroxy-N-methylcoclaurine + oxidized [NADPH--hemoprotein reductase] + H2O + H(+). It participates in alkaloid biosynthesis; (S)-reticuline biosynthesis; (S)-reticuline from (S)-norcoclaurine: step 3/4. Functionally, cytochrome P450 monooxygenase involved in the biosynthesis of benzylisoquinoline alkaloids. Catalyzes the 3'-hydroxylation of (S)-N-methylcoclaurine. The polypeptide is (S)-N-methylcoclaurine 3'-hydroxylase isozyme 1 (Papaver somniferum (Opium poppy)).